The chain runs to 545 residues: MLLKNCETDKQRDIRYACLFKELDVKGNGQVTLDNLISAFEKNDHPLKGNDEAIKMLFTAMDVNKDSVVDLSDFKKYASNAESQIWNGFQRIDLDHDGKIGINEINRYLSDLDNQSICNNELNHELSNEKMNKFSRFFEWAFPKRKANIALRGQASHKKNTDNDRSKKTTDSDLYVTYDQWRDFLLLVPRKQGSRLHTAYSYFYLFNEDVDLSSEGDVTLINDFIRGFGFFIAGGISGVISRTCTAPFDRLKVFLIARTDLSSILLNSKTDLLAKNPNADINKISSPLAKAVKSLYRQGGIKAFYVGNGLNVIKVFPESSIKFGSFEVTKKIMTKLEGCRDTKDLSKFSTYIAGGLAGMAAQFSVYPIDTLKFRVQCAPLDTKLKGNNLLFQTAKDMFREGGLRLFYRGVTVGIVGIFPYAALDLGTFSALKKWYIAKQAKTLNLPQDQVTLSNLVVLPMGAFSGTVGASVVYPINLLRTRLQAQGTYAHPYVYNGFKDVLLKTLEREGYQGLFKGLVPTLAKVCPAVSISYLCYENLKKFMNLE.

The EF-hand 1 domain occupies 11–46 (QRDIRYACLFKELDVKGNGQVTLDNLISAFEKNDHP). Ca(2+)-binding residues include Lys-65, Asp-70, Asp-93, Asp-95, Asp-97, Lys-99, and Glu-104. EF-hand domains lie at 80–115 (NAESQIWNGFQRIDLDHDGKIGINEINRYLSDLDNQ), 120–155 (NELNHELSNEKMNKFSRFFEWAFPKRKANIALRGQA), and 156–191 (SHKKNTDNDRSKKTTDSDLYVTYDQWRDFLLLVPRK). Residues Thr-161 and Ser-166 each coordinate Ca(2+). Solcar repeat units lie at residues 225-332 (IRGF…TKKI), 345-434 (LSKF…LKKW), and 452-541 (LSNL…LKKF). 6 consecutive transmembrane segments (helical) span residues 231-248 (FIAGGISGVISRTCTAPF), 307-326 (GNGLNVIKVFPESSIKFGSF), 355-368 (GLAGMAAQFSVYPI), 409-428 (GVTVGIVGIFPYAALDLGTF), 458-475 (LPMGAFSGTVGASVVYPI), and 516-535 (GLVPTLAKVCPAVSISYLCY).

Belongs to the mitochondrial carrier (TC 2.A.29) family.

Its subcellular location is the mitochondrion inner membrane. Its function is as follows. Calcium-dependent mitochondrial solute carrier. In Saccharomyces cerevisiae (Baker's yeast), this protein is Calcium-binding mitochondrial carrier SAL1 (SAL1).